The following is a 261-amino-acid chain: 3-hydroxyacyl-CoA dehydrogenase type-2 (261 aa).

The residue at position 2 (A2) is an N-acetylalanine. 3 residues coordinate NAD(+): S20, L22, and D41. Residue K53 is modified to N6-acetyllysine; alternate. K53 is modified (N6-succinyllysine; alternate). Position 65 (V65) interacts with NAD(+). K69 is subject to N6-acetyllysine. An NAD(+)-binding site is contributed by C91. An N6-acetyllysine mark is found at K99 and K105. S155 contributes to the substrate binding site. NAD(+)-binding residues include Y168, K172, F201, and T203. The active-site Proton acceptor is the Y168. At K212 the chain carries N6-acetyllysine; alternate. N6-succinyllysine; alternate is present on K212.

It belongs to the short-chain dehydrogenases/reductases (SDR) family. In terms of assembly, homotetramer. Component of mitochondrial ribonuclease P, a complex composed of TRMT10C/MRPP1, HSD17B10/MRPP2 and PRORP/MRPP3. Interacts with TRMT10C/MRPP1; forming the MRPP1-MRPP2 subcomplex of the mitochondrial ribonuclease P complex.

The protein resides in the mitochondrion. It localises to the mitochondrion matrix. The protein localises to the mitochondrion nucleoid. It carries out the reaction a (3S)-3-hydroxyacyl-CoA + NAD(+) = a 3-oxoacyl-CoA + NADH + H(+). The enzyme catalyses (2S,3S)-3-hydroxy-2-methylbutanoyl-CoA + NAD(+) = 2-methyl-3-oxobutanoyl-CoA + NADH + H(+). It catalyses the reaction testosterone + NAD(+) = androst-4-ene-3,17-dione + NADH + H(+). The catalysed reaction is 5alpha-androstane-3alpha,17beta-diol + NAD(+) = 17beta-hydroxy-5alpha-androstan-3-one + NADH + H(+). It carries out the reaction 17beta-estradiol + NAD(+) = estrone + NADH + H(+). The enzyme catalyses cholate + NAD(+) = 3alpha,12alpha-dihydroxy-7-oxo-5beta-cholanate + NADH + H(+). It catalyses the reaction (3S)-3-hydroxybutanoyl-CoA + NAD(+) = acetoacetyl-CoA + NADH + H(+). The catalysed reaction is (3S)-hydroxyoctanoyl-CoA + NAD(+) = 3-oxooctanoyl-CoA + NADH + H(+). It carries out the reaction (3S)-hydroxyhexadecanoyl-CoA + NAD(+) = 3-oxohexadecanoyl-CoA + NADH + H(+). The enzyme catalyses 17beta-hydroxy-5alpha-androstan-3-one + NAD(+) = 5alpha-androstan-3,17-dione + NADH + H(+). It catalyses the reaction 5alpha-pregnan-20beta-ol-3-one + NAD(+) = 5alpha-pregnane-3,20-dione + NADH + H(+). The catalysed reaction is 3alpha-hydroxy-5alpha-pregnan-20-one + NAD(+) = 5alpha-pregnane-3,20-dione + NADH + H(+). It carries out the reaction cortisone + NAD(+) = 17alpha-hydroxypregn-4-en-3,11,20-trione-21-al + NADH + H(+). The enzyme catalyses 11-dehydrocorticosterone + NAD(+) = pregn-4-ene-3,11,20,21-tetraone + NADH + H(+). It catalyses the reaction cortisol + NAD(+) = 11beta,17alpha-dihydroxypregn-4-ene-3,20,21-trione + NADH + H(+). The catalysed reaction is chenodeoxycholate + NAD(+) = 7-oxolithocholate + NADH + H(+). It carries out the reaction ursodeoxycholate + NAD(+) = 7-oxolithocholate + NADH + H(+). The enzyme catalyses 3beta,7beta-dihydroxy-5beta-cholan-24-oate + NAD(+) = 3beta-hydroxy-7-oxo-5beta-cholan-24-oate + NADH + H(+). Its pathway is amino-acid degradation; L-isoleucine degradation. It functions in the pathway lipid metabolism; fatty acid beta-oxidation. It participates in steroid metabolism. The protein operates within lipid metabolism; bile acid biosynthesis. Functionally, mitochondrial dehydrogenase involved in pathways of fatty acid, branched-chain amino acid and steroid metabolism. Acts as (S)-3-hydroxyacyl-CoA dehydrogenase in mitochondrial fatty acid beta-oxidation, a major degradation pathway of fatty acids. Catalyzes the third step in the beta-oxidation cycle, namely the reversible conversion of (S)-3-hydroxyacyl-CoA to 3-ketoacyl-CoA. Preferentially accepts straight medium- and short-chain acyl-CoA substrates with highest efficiency for (3S)-hydroxybutanoyl-CoA. Acts as 3-hydroxy-2-methylbutyryl-CoA dehydrogenase in branched-chain amino acid catabolic pathway. Catalyzes the oxidation of 3-hydroxy-2-methylbutanoyl-CoA into 2-methyl-3-oxobutanoyl-CoA, a step in isoleucine degradation pathway. Has hydroxysteroid dehydrogenase activity toward steroid hormones and bile acids. Catalyzes the oxidation of 3alpha-, 17beta-, 20beta- and 21-hydroxysteroids and 7alpha- and 7beta-hydroxy bile acids. Oxidizes allopregnanolone/brexanolone at the 3alpha-hydroxyl group, which is known to be critical for the activation of gamma-aminobutyric acid receptors (GABAARs) chloride channel. Has phospholipase C-like activity toward cardiolipin and its oxidized species. Likely oxidizes the 2'-hydroxyl in the head group of cardiolipin to form a ketone intermediate that undergoes nucleophilic attack by water and fragments into diacylglycerol, dihydroxyacetone and orthophosphate. Has higher affinity for cardiolipin with oxidized fatty acids and may degrade these species during the oxidative stress response to protect cells from apoptosis. By interacting with intracellular amyloid-beta, it may contribute to the neuronal dysfunction associated with Alzheimer disease (AD). Essential for structural and functional integrity of mitochondria. Its function is as follows. In addition to mitochondrial dehydrogenase activity, moonlights as a component of mitochondrial ribonuclease P, a complex that cleaves tRNA molecules in their 5'-ends. Together with TRMT10C/MRPP1, forms a subcomplex of the mitochondrial ribonuclease P, named MRPP1-MRPP2 subcomplex, which displays functions that are independent of the ribonuclease P activity. The MRPP1-MRPP2 subcomplex catalyzes the formation of N(1)-methylguanine and N(1)-methyladenine at position 9 (m1G9 and m1A9, respectively) in tRNAs; HSD17B10/MRPP2 acting as a non-catalytic subunit. The MRPP1-MRPP2 subcomplex also acts as a tRNA maturation platform: following 5'-end cleavage by the mitochondrial ribonuclease P complex, the MRPP1-MRPP2 subcomplex enhances the efficiency of 3'-processing catalyzed by ELAC2, retains the tRNA product after ELAC2 processing and presents the nascent tRNA to the mitochondrial CCA tRNA nucleotidyltransferase TRNT1 enzyme. Associates with mitochondrial DNA complexes at the nucleoids to initiate RNA processing and ribosome assembly. This chain is 3-hydroxyacyl-CoA dehydrogenase type-2 (Hsd17b10), found in Rattus norvegicus (Rat).